Consider the following 680-residue polypeptide: Leucine-rich repeat and calponin homology domain-containing protein 4 (680 aa).

The segment covering 1–22 (MAAAVAGPLAAGGEEAAASVSL) has biased composition (low complexity). A disordered region spans residues 1–35 (MAAAVAGPLAAGGEEAAASVSLPGSPGLPGSRSAE). LRR repeat units follow at residues 41-64 (AVAT…AARS), 67-90 (LSDI…ACQL), 92-113 (SLEG…LGNL), 114-136 (TALT…ICQL), 138-158 (LRVL…ISTL), 159-181 (GSLR…LCSL), 182-204 (RSLR…LGDL), 206-226 (LVRL…FCRL), and 227-250 (RHLQ…CLKG). Phosphoserine occurs at positions 279, 281, 304, 307, 309, and 313. A disordered region spans residues 329 to 528 (SELARDPRGP…PSSPESVLRP (200 aa)). A compositionally biased stretch (basic and acidic residues) spans 330–345 (ELARDPRGPRQPREDG). Over residues 346-355 (AGDGDLEQID) the composition is skewed to acidic residues. Basic and acidic residues-rich tracts occupy residues 357-371 (IDSH…RSAA) and 385-418 (DVEK…ERKQ). The residue at position 432 (S432) is a Phosphoserine. Low complexity-rich tracts occupy residues 440–453 (AAGA…TQAT) and 510–528 (RSSS…VLRP). Phosphoserine is present on residues S511, S513, S517, S521, and S586. A Calponin-homology (CH) domain is found at 531 to 644 (FPQEKELISQ…VLEAVILVGG (114 aa)). The helical transmembrane segment at 655 to 675 (GLGGFLLFYVVFMLLLYVVYT) threads the bilayer.

In terms of tissue distribution, widely expressed across tissues, with the most abundant expression in spleen, testes, thymus, intestine, and blood. Expressed in macrophages.

It localises to the cell membrane. In terms of biological role, accessory protein that regulates signaling by multiple TLRs, acting as a broad-spanning regulator of the innate immune response. In macrophages, binds LPS and promotes proper docking of LPS in lipid raft membrane. May be required for lipid raft maintenance. The sequence is that of Leucine-rich repeat and calponin homology domain-containing protein 4 (Lrch4) from Mus musculus (Mouse).